A 137-amino-acid polypeptide reads, in one-letter code: Universal stress protein in QAH/OAS sulfhydrylase 3'region (137 aa).

Belongs to the universal stress protein A family.

The sequence is that of Universal stress protein in QAH/OAS sulfhydrylase 3'region from Thermus aquaticus.